The chain runs to 229 residues: uncharacterized protein (229 aa).

This is an uncharacterized protein from Dictyostelium discoideum (Social amoeba).